A 223-amino-acid polypeptide reads, in one-letter code: GTP-binding nuclear protein Ran (223 aa).

Residues 8–172 (VVAEFKLVLV…LWILRKLTGD (165 aa)) enclose the Small GTPase Ran-type domain. 19-26 (DGGVGKTT) contacts GTP. Residues 38-46 (KRYIATQGV) are switch-I. GTP is bound by residues Gly69, 123–126 (NKVD), and 151–153 (SAK). The tract at residues 69 to 85 (GQEKLGGLREGYYIGAD) is switch-II.

It belongs to the small GTPase superfamily. Ran family. In terms of assembly, monomer. Found in a nuclear export complex with RanGTP, exportin and pre-miRNA.

It is found in the nucleus. GTP-binding protein involved in nucleocytoplasmic transport. Required for the import of protein into the nucleus and also for RNA export. Involved in chromatin condensation and control of cell cycle. This Tetrahymena pyriformis protein is GTP-binding nuclear protein Ran.